Here is a 697-residue protein sequence, read N- to C-terminus: Phenoloxidase 1 (697 aa).

A propeptide spans 1-101 (MSDMSGDVVE…PKHQEMATEV (101 aa)) (removed by PPAE1). Cu cation is bound by residues H217, H221, and H247. 2 N-linked (GlcNAc...) asparagine glycosylation sites follow: N260 and N313. The active-site Proton acceptor is the E355. The Cu cation site is built by H370, H374, and H410. N-linked (GlcNAc...) asparagine glycosylation is found at N498 and N552. Cystine bridges form between C587–C631 and C589–C638.

Belongs to the tyrosinase family. Heterodimer. Requires Cu(2+) as cofactor. Activated by the cleavage of the N-terminal propeptide by PPAE1. In terms of tissue distribution, expressed in hemocytes.

Its subcellular location is the secreted. The enzyme catalyses L-tyrosine + O2 = L-dopaquinone + H2O. It carries out the reaction 2 L-dopa + O2 = 2 L-dopaquinone + 2 H2O. Its activity is regulated as follows. Activated by a cationic detergent cetyl pyridinium chloride (CPC). Inhibited by phenyl thio-urea (PTU). Its function is as follows. This is a copper-containing oxidase that functions in the formation of pigments such as melanins and other polyphenolic compounds. Catalyzes the rate-limiting conversions of tyrosine to DOPA, DOPA to DOPA-quinone and possibly 5,6 dihydroxyindole to indole-5'6 quinone. Catalyzes the oxidation of 4-methylcatechol. Binds to the surface of hemocytes and is involved in hemocyte melanization. This is Phenoloxidase 1 from Spodoptera litura (Asian cotton leafworm).